The chain runs to 757 residues: RNA exonuclease 3 (757 aa).

Disordered regions lie at residues 56 to 259 (VKRE…AEHL) and 474 to 590 (ESLD…CDQA). The span at 120-132 (EGGRAEGAEKKEF) shows a compositional bias: basic and acidic residues. Polar residues-rich tracts occupy residues 145-172 (TPHA…SSVS), 202-223 (QPSS…SSPK), and 230-240 (MTTSASPSQSR). Composition is skewed to low complexity over residues 244–253 (RNTSASPSSS) and 474–502 (ESLD…KTAS). The span at 503 to 516 (RPASTPTKSLTSSL) shows a compositional bias: polar residues. 2 stretches are compositionally biased toward basic and acidic residues: residues 543 to 557 (REPD…RGIG) and 565 to 581 (SQER…RVRE). The Exonuclease domain occupies 597–751 (VVAVDCEMLY…EDALAALDVV (155 aa)).

This sequence belongs to the REXO1/REXO3 family.

It localises to the cytoplasm. The protein resides in the nucleus. In terms of biological role, 3' to 5' exoribonuclease required for proper 3' end maturation of MRP RNA and of the U5L snRNA. The sequence is that of RNA exonuclease 3 (REX3) from Yarrowia lipolytica (strain CLIB 122 / E 150) (Yeast).